The chain runs to 331 residues: DNA-directed RNA polymerase subunit alpha (331 aa).

Residues 1 to 237 (MQSFEKEFLK…DQLSSFIDLK (237 aa)) are alpha N-terminal domain (alpha-NTD). Residues 251–331 (FDPSLLNLVD…NWPPKHLSEQ (81 aa)) are alpha C-terminal domain (alpha-CTD).

Belongs to the RNA polymerase alpha chain family. Homodimer. The RNAP catalytic core consists of 2 alpha, 1 beta, 1 beta' and 1 omega subunit. When a sigma factor is associated with the core the holoenzyme is formed, which can initiate transcription.

The catalysed reaction is RNA(n) + a ribonucleoside 5'-triphosphate = RNA(n+1) + diphosphate. Functionally, DNA-dependent RNA polymerase catalyzes the transcription of DNA into RNA using the four ribonucleoside triphosphates as substrates. This Blochmanniella floridana protein is DNA-directed RNA polymerase subunit alpha.